A 365-amino-acid polypeptide reads, in one-letter code: 3-dehydroquinate synthase (365 aa).

Residues 69 to 74 (DGEAHK), 103 to 107 (GVIGD), 127 to 128 (TT), Lys140, and Lys149 each bind NAD(+). Zn(2+)-binding residues include Glu182, His245, and His262.

It belongs to the sugar phosphate cyclases superfamily. Dehydroquinate synthase family. NAD(+) serves as cofactor. The cofactor is Co(2+). It depends on Zn(2+) as a cofactor.

The protein localises to the cytoplasm. The catalysed reaction is 7-phospho-2-dehydro-3-deoxy-D-arabino-heptonate = 3-dehydroquinate + phosphate. It participates in metabolic intermediate biosynthesis; chorismate biosynthesis; chorismate from D-erythrose 4-phosphate and phosphoenolpyruvate: step 2/7. In terms of biological role, catalyzes the conversion of 3-deoxy-D-arabino-heptulosonate 7-phosphate (DAHP) to dehydroquinate (DHQ). The polypeptide is 3-dehydroquinate synthase (Pseudomonas putida (strain ATCC 47054 / DSM 6125 / CFBP 8728 / NCIMB 11950 / KT2440)).